Consider the following 291-residue polypeptide: Acetyl-coenzyme A carboxylase carboxyl transferase subunit beta (291 aa).

The region spanning 36 to 291 is the CoA carboxyltransferase N-terminal domain; the sequence is MWVKCDGCGK…KILVIHGRGN (256 aa). Zn(2+) contacts are provided by Cys-40, Cys-43, Cys-59, and Cys-62. The C4-type zinc-finger motif lies at 40–62; it reads CDGCGKVLYKNDMEKNNKVCYHC.

Belongs to the AccD/PCCB family. In terms of assembly, acetyl-CoA carboxylase is a heterohexamer composed of biotin carboxyl carrier protein (AccB), biotin carboxylase (AccC) and two subunits each of ACCase subunit alpha (AccA) and ACCase subunit beta (AccD). Zn(2+) serves as cofactor.

Its subcellular location is the cytoplasm. The catalysed reaction is N(6)-carboxybiotinyl-L-lysyl-[protein] + acetyl-CoA = N(6)-biotinyl-L-lysyl-[protein] + malonyl-CoA. The protein operates within lipid metabolism; malonyl-CoA biosynthesis; malonyl-CoA from acetyl-CoA: step 1/1. Its function is as follows. Component of the acetyl coenzyme A carboxylase (ACC) complex. Biotin carboxylase (BC) catalyzes the carboxylation of biotin on its carrier protein (BCCP) and then the CO(2) group is transferred by the transcarboxylase to acetyl-CoA to form malonyl-CoA. This Clostridium kluyveri (strain NBRC 12016) protein is Acetyl-coenzyme A carboxylase carboxyl transferase subunit beta.